The chain runs to 178 residues: Fatty-acid and retinol-binding protein 1 (178 aa).

A signal peptide spans 1 to 16 (MYHQLILMALIGVIMA). N-linked (GlcNAc...) asparagine glycosylation is found at Asn-44 and Asn-75. Coiled coils occupy residues 67-89 (DAAL…ELRN) and 122-154 (QKLD…LKAT). N-linked (GlcNAc...) asparagine glycosylation is present at Asn-157.

This sequence belongs to the fatty-acid and retinol-binding protein (FARBP) family. Post-translationally, N-glycosylated.

It localises to the secreted. Binds retinol and different fatty acids. The sequence is that of Fatty-acid and retinol-binding protein 1 from Onchocerca ochengi (Filarial nematode worm).